We begin with the raw amino-acid sequence, 242 residues long: MSIVNIAAYKFVSLPDTVLLREALQERADALGLKGTILLAPEGINLFLAGSGEAIEAFLAGLRADARFADIEVKYSTSADVPFGKMRVRLKREIIRMNHPAIRPEAGRAPSVNAHTLARWLEQGRDDDGREVVMLDTRNAFEVDVGTFRNAIDWRIDRFTQFPDAVREHRAELEGKTVVSFCTGGIRCEKAAIFMEDIGIAHVYQLEGGILKYFEETGGPGYDGACFVFDERHALDPALKPV.

The region spanning 128–222 (DGREVVMLDT…YFEETGGPGY (95 aa)) is the Rhodanese domain. Cys182 (cysteine persulfide intermediate) is an active-site residue.

The protein belongs to the TrhO family.

It carries out the reaction uridine(34) in tRNA + AH2 + O2 = 5-hydroxyuridine(34) in tRNA + A + H2O. Functionally, catalyzes oxygen-dependent 5-hydroxyuridine (ho5U) modification at position 34 in tRNAs. The chain is tRNA uridine(34) hydroxylase from Bordetella avium (strain 197N).